The sequence spans 418 residues: Geranylgeranyl pyrophosphate synthase (418 aa).

The span at 51–64 (TSSTGIPTSLNATP) shows a compositional bias: polar residues. Residues 51–73 (TSSTGIPTSLNATPTKPVLRPVP) form a disordered region. 3 residues coordinate isopentenyl diphosphate: K143, R146, and H175. Positions 182 and 186 each coordinate Mg(2+). R191 is a binding site for dimethylallyl diphosphate. Position 192 (R192) interacts with isopentenyl diphosphate. Dimethylallyl diphosphate-binding residues include K269, T270, Q305, K322, and K332.

The protein belongs to the FPP/GGPP synthase family. It depends on Mg(2+) as a cofactor.

Its subcellular location is the cytoplasm. The catalysed reaction is isopentenyl diphosphate + dimethylallyl diphosphate = (2E)-geranyl diphosphate + diphosphate. It catalyses the reaction isopentenyl diphosphate + (2E)-geranyl diphosphate = (2E,6E)-farnesyl diphosphate + diphosphate. The enzyme catalyses isopentenyl diphosphate + (2E,6E)-farnesyl diphosphate = (2E,6E,10E)-geranylgeranyl diphosphate + diphosphate. Its pathway is isoprenoid biosynthesis; farnesyl diphosphate biosynthesis; farnesyl diphosphate from geranyl diphosphate and isopentenyl diphosphate: step 1/1. The protein operates within isoprenoid biosynthesis; geranyl diphosphate biosynthesis; geranyl diphosphate from dimethylallyl diphosphate and isopentenyl diphosphate: step 1/1. It functions in the pathway isoprenoid biosynthesis; geranylgeranyl diphosphate biosynthesis; geranylgeranyl diphosphate from farnesyl diphosphate and isopentenyl diphosphate: step 1/1. Its function is as follows. Catalyzes the trans-addition of the three molecules of IPP onto DMAPP to form geranylgeranyl pyrophosphate. This Fusarium fujikuroi (Bakanae and foot rot disease fungus) protein is Geranylgeranyl pyrophosphate synthase (GGS).